Reading from the N-terminus, the 132-residue chain is Small ribosomal subunit protein uS8 (132 aa).

The protein belongs to the universal ribosomal protein uS8 family. As to quaternary structure, part of the 30S ribosomal subunit. Contacts proteins S5 and S12.

One of the primary rRNA binding proteins, it binds directly to 16S rRNA central domain where it helps coordinate assembly of the platform of the 30S subunit. The polypeptide is Small ribosomal subunit protein uS8 (Syntrophomonas wolfei subsp. wolfei (strain DSM 2245B / Goettingen)).